We begin with the raw amino-acid sequence, 176 residues long: Putative phosphohydrolase YueE (176 aa).

The 117-residue stretch at 23-139 (GVAHAIACAY…VKKADELDEE (117 aa)) folds into the HD domain.

In Bacillus subtilis (strain 168), this protein is Putative phosphohydrolase YueE (yueE).